The sequence spans 2624 residues: Highly reducing polyketide synthase ALT1 (2624 aa).

A Ketosynthase family 3 (KS3) domain is found at 28-449; sequence VLPLAIVGMG…GSNAHCILES (422 aa). The For beta-ketoacyl synthase activity role is filled by Cys200. Residues 289-308 form a disordered region; it reads VRGTSSNSDGKTPGMSMPSS. Active-site for beta-ketoacyl synthase activity residues include His335 and His372. Over residues 523-544 the composition is skewed to polar residues; it reads ESYSNHHTLTETTNPSNNTATN. The disordered stretch occupies residues 523–545; the sequence is ESYSNHHTLTETTNPSNNTATNG. The segment at 639–945 is malonyl-CoA:ACP transacylase (MAT) domain; it reads VFTGQGAQWA…GYTPAMIRGK (307 aa). The N-terminal hotdog fold stretch occupies residues 1009–1140; that stretch reads HELLGSQTLE…GQVRPGRDAH (132 aa). Positions 1009–1301 are dehydratase (DH) domain; that stretch reads HELLGSQTLE…LEGGKFSPIE (293 aa). Residues 1009-1306 form the PKS/mFAS DH domain; that stretch reads HELLGSQTLE…FSPIEVDDGI (298 aa). His1041 serves as the catalytic Proton acceptor; for dehydratase activity. Residues 1157 to 1306 are C-terminal hotdog fold; sequence QYPRPVDSLY…FSPIEVDDGI (150 aa). Asp1217 acts as the Proton donor; for dehydratase activity in catalysis. The interval 1493 to 1599 is methyltransferase (CMet) domain; the sequence is LEIGAGTGGA…RKLLAPEGYL (107 aa). The segment at 1895–2205 is enoyl reductase (ER) (ER) domain; the sequence is GLLQTLKWVD…KGTHLGKIVV (311 aa). Residues 2230–2509 are ketoreductase (KR) domain; that stretch reads TYVLVGGLGG…DSDALRFFIT (280 aa). The Carrier domain maps to 2522–2600; sequence ASLDLVTRTI…GLAKLILDAL (79 aa). O-(pantetheine 4'-phosphoryl)serine is present on Ser2559.

Its pathway is mycotoxin biosynthesis. Its function is as follows. Highly reducing polyketide synthase; part of the gene cluster that mediates the biosynthesis of the host-selective toxins (HSTs) AAL-toxins, sphinganine-analog mycotoxins responsible for Alternaria stem canker on tomato by the tomato pathotype. The biosynthesis starts with the polyketide synthase ALT1-catalyzed C-16 carbon chain assembly from one starter acetyl-CoA unit with malonyl-CoA extender units. ALT1 also selectively transfers methyl groups at the first and the third cycle of chain elongation for AAL toxin. The C-16 polyketide chain is released from the enzyme by a nucleophilic attack of a carbanion, which is derived from R-carbon of glycin by decarboxylation, on the carbonyl carbon of polyketide acyl chain. This step is probably catalyzed by a pyridoxal 5'-phosphate-dependent aminoacyl transferase ALT4. The respective functions of the other enzymes encoded by the cluster have still to be elucidated. The sphingosine N-acyltransferase-like protein ALT7 seems not to act as a resistance/self-tolerance factor against the toxin in the toxin biosynthetic gene cluster, contrary to what is expected. The polypeptide is Highly reducing polyketide synthase ALT1 (Alternaria alternata (Alternaria rot fungus)).